Here is a 704-residue protein sequence, read N- to C-terminus: Polyribonucleotide nucleotidyltransferase (704 aa).

Residues Asp-485 and Asp-491 each contribute to the Mg(2+) site. A KH domain is found at 552 to 611 (PKTETIQIDPDKIRSVIGAGGKVINKIIQDTGVKIDIKEDGSVFVSSSDHAGVKEAIKII). In terms of domain architecture, S1 motif spans 621 to 689 (GEIYLGKVTK…SQGRINLSRK (69 aa)).

It belongs to the polyribonucleotide nucleotidyltransferase family. Mg(2+) is required as a cofactor.

The protein resides in the cytoplasm. The catalysed reaction is RNA(n+1) + phosphate = RNA(n) + a ribonucleoside 5'-diphosphate. Functionally, involved in mRNA degradation. Catalyzes the phosphorolysis of single-stranded polyribonucleotides processively in the 3'- to 5'-direction. The polypeptide is Polyribonucleotide nucleotidyltransferase (Clostridium botulinum (strain Eklund 17B / Type B)).